Consider the following 507-residue polypeptide: Phosphoprotein (507 aa).

Residues 1-48 form an interaction with N0 region; sequence MAEEQARHVKNGLECIRALKAEPIGSLAIGEAMAAWSEISDNPGQEQA. Disordered stretches follow at residues 40 to 98, 134 to 174, 201 to 231, and 251 to 305; these read SDNP…FPSR, GLDG…APIS, NNFPKLGKTLNVPPPPDPGRASTSETPIKKG, and ATQC…KGGD. Phosphoserine is present on S86. Over residues 134 to 145 the composition is skewed to low complexity; it reads GLDGDSTLSGGD. Residues 146–160 are compositionally biased toward acidic residues; sequence NESENSDVDIGEPDT. S151 is modified (phosphoserine). Residues 260-270 show a composition bias toward low complexity; sequence SEPSGPGAPAG. Residues 279–300 show a composition bias toward polar residues; that stretch reads AALTQEWTPESGTTISPRSQNK. The segment at 304–376 is multimerization; the sequence is GDYYDDELFS…LSSIMIAIPG (73 aa). Interaction with the L polymerase regions lie at residues 361 to 377 and 396 to 410; these read STLEGHLSSIMIAIPGL and PIIGRDSGRALAEVL. The interval 457-507 is x domain (XD); sequence GPASRSVIRSIIKSSRIEEDRKRYLMTLLDDIKGANDLAKFHQMLMKIIMK. Residues 459–507 form an interaction with the nucleocapsid (N-RNA) region; that stretch reads ASRSVIRSIIKSSRIEEDRKRYLMTLLDDIKGANDLAKFHQMLMKIIMK.

This sequence belongs to the morbillivirus P protein family. As to quaternary structure, homotetramer. Interacts (via multimerization domain and XD domain) with polymerase L; this interaction forms the polymerase L-P complex. Interacts (via N-terminus) with N0 (via Ncore); this interaction allows P to chaperon N0 to avoid N polymerization and non-specific RNA binding before encapsidation. Interacts (via C-terminus) with N-RNA template (via Ntail); this interaction maintains the P/L complex anchored to the nucleocapsid template during the sequential transcription. Interacts (via C-terminus) with protein C this interaction allows C to associate with the ribonucleocapsid. In terms of processing, phosphorylation on serines by host CK2 is necessary for the formation of viral factories.

Functionally, essential cofactor of the RNA polymerase L that plays a central role in the transcription and replication by forming the polymerase complex with RNA polymerase L and recruiting L to the genomic N-RNA template for RNA synthesis. Also plays a central role in the encapsidation of nascent RNA chains by forming the encapsidation complex with the nucleocapsid protein N (N-P complex). Acts as a chaperone for newly synthesized free N protein, so-called N0, allowing encapsidation of nascent RNA chains during replication. The nucleoprotein protein N prevents excessive phosphorylation of P, which leads to down-regulation of viral transcription/ replication. Participates, together with N, in the formation of viral factories (viroplasms), which are large inclusions in the host cytoplasm where replication takes place. The polypeptide is Phosphoprotein (P/V) (Homo sapiens (Human)).